Reading from the N-terminus, the 265-residue chain is Non-seed lectin (265 aa).

Positions 1-21 (MALYRTKELVSLVSIMFVLLA) form a signal peptide, or 23. Residues N59 and N127 are each glycosylated (N-linked (GlcNAc...) asparagine).

It belongs to the leguminous lectin family. In terms of assembly, monomer. In terms of tissue distribution, most highly expressed in the epidermal layer of developing shoot tips.

The polypeptide is Non-seed lectin (Pisum sativum (Garden pea)).